The sequence spans 142 residues: Large ribosomal subunit protein uL22c (142 aa).

This sequence belongs to the universal ribosomal protein uL22 family. In terms of assembly, part of the 50S ribosomal subunit.

It is found in the plastid. It localises to the chloroplast. Its function is as follows. This protein binds specifically to 23S rRNA. The globular domain of the protein is located near the polypeptide exit tunnel on the outside of the subunit, while an extended beta-hairpin is found that lines the wall of the exit tunnel in the center of the 70S ribosome. The chain is Large ribosomal subunit protein uL22c (rpl22) from Pinus koraiensis (Korean pine).